Reading from the N-terminus, the 554-residue chain is Glucose-6-phosphate isomerase (554 aa).

The Proton donor role is filled by Glu359. Residues His390 and Lys518 contribute to the active site.

The protein belongs to the GPI family.

Its subcellular location is the cytoplasm. The catalysed reaction is alpha-D-glucose 6-phosphate = beta-D-fructose 6-phosphate. It participates in carbohydrate biosynthesis; gluconeogenesis. Its pathway is carbohydrate degradation; glycolysis; D-glyceraldehyde 3-phosphate and glycerone phosphate from D-glucose: step 2/4. Its function is as follows. Catalyzes the reversible isomerization of glucose-6-phosphate to fructose-6-phosphate. The protein is Glucose-6-phosphate isomerase of Pseudomonas fluorescens.